Consider the following 137-residue polypeptide: Ig heavy chain V region MOPC 315 (137 aa).

The signal sequence occupies residues 1–18; sequence MKVLSLLYLLTAIPGIMS. Residues 19–48 form a framework-1 region; it reads DVQLQESGPGLVKPSQSLSLTCSVTGYSIT. Cys40 and Cys114 form a disulfide bridge. Positions 49-54 are complementarity-determining-1; that stretch reads SGYFWN. Residues 55–68 form a framework-2 region; that stretch reads WIRQFPGNKLEWLG. A complementarity-determining-2 region spans residues 69-84; sequence FIKYDGSNGYNPSLKN. A framework-3 region spans residues 85–116; it reads RVSITRDTSENQFFLKLNSVTTEDTATYYCAG. The tract at residues 117-126 is complementarity-determining-3; the sequence is DNDHLYYFDY. A framework-4 region spans residues 127–137; sequence WGQGTTLTVSS.

The chain is Ig heavy chain V region MOPC 315 from Mus musculus (Mouse).